The chain runs to 55 residues: MAVQQNKPTRSKRGMRRSHDALTTATLSVDKTSGETHLRHHITADGFYRGRKVIG.

Residues 1-27 (MAVQQNKPTRSKRGMRRSHDALTTATL) form a disordered region.

It belongs to the bacterial ribosomal protein bL32 family.

The protein is Large ribosomal subunit protein bL32 of Yersinia enterocolitica serotype O:8 / biotype 1B (strain NCTC 13174 / 8081).